We begin with the raw amino-acid sequence, 301 residues long: tRNA dimethylallyltransferase (301 aa).

ATP is bound at residue 12 to 19 (GPTASGKT). Residue 14–19 (TASGKT) participates in substrate binding. An interaction with substrate tRNA region spans residues 37-40 (DSLS).

This sequence belongs to the IPP transferase family. Monomer. Mg(2+) serves as cofactor.

The enzyme catalyses adenosine(37) in tRNA + dimethylallyl diphosphate = N(6)-dimethylallyladenosine(37) in tRNA + diphosphate. In terms of biological role, catalyzes the transfer of a dimethylallyl group onto the adenine at position 37 in tRNAs that read codons beginning with uridine, leading to the formation of N6-(dimethylallyl)adenosine (i(6)A). This chain is tRNA dimethylallyltransferase, found in Sulfurovum sp. (strain NBC37-1).